Here is a 656-residue protein sequence, read N- to C-terminus: MQKSLITTPIYYVNDIPHIGHAYTTLIADTLKKYYTLQGEEVFFLTGTDEHGQKIEQSARLRNQSPKAYADSISAIFKNQWDFFNLDYDGFIRTTDSEHQKCVQNAFEIMFEKGDIYKGTYSGYYCVSCESYCAVSKVDNTDSKVLCPDCLRETTLLEEESYFFKLSAYEKPLLEFYAKNPEAILPIYRKNEVTSFIEQGLLDLSITRTSFEWGIPLPKKMNDPKHVVYVWLDALLNYASALGYLNGLDNKMAHFERARHIVGKDILRFHAIYWPAFLMSLNLPLFKQLCVHGWWTIEGVKMSKSLGNVLDAQKLAMEYGIEELRYFLLREVPFGQDGDFSKKALVERINANLNNDLGNLLNRLLGMAKKYFNYSLKSTKITAYYPKELEKAHQILDNANSFVPKMQLHKALEELFNIYDFLNKLIAKEEPWVLHKNNESEKLEALLSLIANTLLQSSFLLYAFMPKSAMKLASAFRVEITPNNYERFFKAKKLQDMVLQDTEPLFSKIEKIEKIEKIEKIEKIEKGEEALAEKAEKKEKEKAPPTQENYISIEDFKKVEIKVGLIKEAQRIEKSNKLLRLKVDLGENRLRQIISGIALDYEPESLVGQMVCVVANLKPAKLMGEMSEGMILAVRDNDNLALISPTREKIAGSLIS.

The 'HIGH' region signature appears at 11 to 21 (YYVNDIPHIGH). Zn(2+)-binding residues include cysteine 126, cysteine 129, cysteine 147, and cysteine 150. A 'KMSKS' region motif is present at residues 301-305 (KMSKS). Lysine 304 contacts ATP. The tRNA-binding domain occupies 555–656 (DFKKVEIKVG…REKIAGSLIS (102 aa)).

Belongs to the class-I aminoacyl-tRNA synthetase family. MetG type 2A subfamily. In terms of assembly, homodimer. Requires Zn(2+) as cofactor.

It localises to the cytoplasm. The enzyme catalyses tRNA(Met) + L-methionine + ATP = L-methionyl-tRNA(Met) + AMP + diphosphate. Functionally, is required not only for elongation of protein synthesis but also for the initiation of all mRNA translation through initiator tRNA(fMet) aminoacylation. The protein is Methionine--tRNA ligase (metG) of Helicobacter pylori (strain J99 / ATCC 700824) (Campylobacter pylori J99).